We begin with the raw amino-acid sequence, 571 residues long: Plastidial pyruvate kinase 3, chloroplastic (571 aa).

A chloroplast-targeting transit peptide spans 1–55 (MAAYGQISSGMTVDPQVLSSSRNIGVSLSPLRRTLIGAGVRSTSISLRQCSLSVR). Arginine 129 contacts substrate. 4 residues coordinate K(+): asparagine 131, serine 133, aspartate 164, and threonine 165. Position 131 to 134 (131 to 134 (NMSH)) interacts with ATP. Arginine 171 is an ATP binding site. Position 314 (lysine 314) interacts with substrate. Glutamate 316 provides a ligand contact to Mg(2+). Glycine 339, aspartate 340, and threonine 372 together coordinate substrate. Position 340 (aspartate 340) interacts with Mg(2+).

This sequence belongs to the pyruvate kinase family. In terms of assembly, oligomer of alpha and beta subunits. The cofactor is Mg(2+). K(+) is required as a cofactor. As to expression, expressed at low levels in roots, leaves, inflorescences, siliques, pollen, seeds and flowers.

The protein localises to the plastid. It is found in the chloroplast stroma. The enzyme catalyses pyruvate + ATP = phosphoenolpyruvate + ADP + H(+). It functions in the pathway carbohydrate degradation; glycolysis; pyruvate from D-glyceraldehyde 3-phosphate: step 5/5. Functionally, required for plastidial pyruvate kinase activity. The sequence is that of Plastidial pyruvate kinase 3, chloroplastic (PKP3) from Arabidopsis thaliana (Mouse-ear cress).